Here is a 215-residue protein sequence, read N- to C-terminus: MKKPYRKISDYAIVGGLSALVMVSIVGCKSNADDKPKEQSSLSQSVQKGAFVILEEQKDKSYKVVEEYPSSRTHIVVRDLQGNERVLSNEEIQKLIKEEEAKIDNGTSKLVQPNNGGSNEGSGFGLGSAILGSAAGAILGSYIGNKLFNNPNYQQNAQRTYKSPQAYQRSQNSFSKSAPSASSMGTASKGQSGFFGSSRPTSSPAISSGTRGFNA.

The first 27 residues, M1–G27, serve as a signal peptide directing secretion. C28 carries N-palmitoyl cysteine lipidation. Residue C28 is the site of S-diacylglycerol cysteine attachment. The span at Q158 to R169 shows a compositional bias: polar residues. Residues Q158–A215 form a disordered region. Residues S170–S183 are compositionally biased toward low complexity. Polar residues predominate over residues M184–F195. A compositionally biased stretch (low complexity) spans S197–S208.

Belongs to the UPF0323 family.

It is found in the cell membrane. The polypeptide is UPF0323 lipoprotein jhp_0217 (Helicobacter pylori (strain J99 / ATCC 700824) (Campylobacter pylori J99)).